The following is a 390-amino-acid chain: Protein dimmed (390 aa).

Residues 24–163 (HNNNNYNTDG…RNMRRLESNE (140 aa)) are disordered. Polar residues-rich tracts occupy residues 29 to 44 (YNTD…SAEG) and 55 to 64 (RTSQLSNNTY). The N-linked (GlcNAc...) asparagine glycan is linked to N61. The span at 69–78 (TDSSSQSDDT) shows a compositional bias: low complexity. Over residues 79-90 (SGGGGSSNGGGS) the composition is skewed to gly residues. The span at 122-141 (PSTIAPNSTSSNSSNANGNA) shows a compositional bias: low complexity. N-linked (GlcNAc...) asparagine glycans are attached at residues N128, N133, and N140. Basic and acidic residues predominate over residues 151 to 163 (AKERNMRRLESNE). The bHLH domain occupies 156 to 208 (MRRLESNERERMRMHSLNDAFQSLREVIPHVEMERRLSKIETLTLAKNYIINL). N-linked (GlcNAc...) asparagine glycosylation is found at N207 and N237. Residues 312–339 (QQQQASHLPHHQQAMHGHGHLGASIQSQ) form a disordered region. N347 carries an N-linked (GlcNAc...) asparagine glycan.

In terms of assembly, forms homodimers via the bHLH domain. These dimers bind the core E-box sequence. In terms of tissue distribution, detected in the developing nervous system in the bilateral domains in the cephalic region that later on forms part of the ring gland. Concomitantly expressed in the larval central nervous system (CNS), including the dorsal chain neurons as well as several bilateral clusters of neurons: large, midline protocerebral brain cells (MC), lateral protocerebral brain cells (LC), ventral subesophageal neurons (SE) and lateral abdominal neurons, and the transverse nerves. Outside the CNS, detected in at least three classes of endocrine cells: intrinsic cells of the corpora cardiaca, midgut cells, the Inka cells, lateral Bipolar neurons associated with the segmental transverse nerve, and several peptidergic cells of the enteric nervous system. Expressed only in central and peripheral neuroendocrine secretory cells and neurosecretory neurons but not in sensory or motor neurons.

Its subcellular location is the cytoplasm. In terms of biological role, transcription factor that regulates neurosecretory (NS) cell function and neuroendocrine cell fate. Acts as a master regulator of common NS functions such as Phm expression and neuropeptide production. Plays a role as a regulator of peptide-containing large dense-core vesicle (LDCV) production and peptidergic cell differentiation. Controls transcription of FMRFamide in Tv neuronal cells and Fur1 in Ap-let cells (Tvb and dorsal apterous cells). Also required for up-regulation of Phm in Tv and Ap-let cells, and expression of three neuropeptide genes, Ms, FMRFamide and Lk. Influences both regulated and constitutive secretory activity in neuroendocrine cells at embryonic and postembryonic level. Loss of function studies show reduced cellular levels of various neuropeptides and neuropeptide biosynthetic enzymes. This chain is Protein dimmed (dimm), found in Drosophila melanogaster (Fruit fly).